Here is a 446-residue protein sequence, read N- to C-terminus: tRNA modification GTPase MnmE (446 aa).

Residues arginine 22, glutamate 80, and arginine 119 each contribute to the (6S)-5-formyl-5,6,7,8-tetrahydrofolate site. The TrmE-type G domain maps to 215–370 (GFKVAIIGKP…LILALENIMN (156 aa)). Position 225 (asparagine 225) interacts with K(+). Residues 225 to 230 (NVGKSS), 244 to 250 (SDIAGTT), and 269 to 272 (DTAG) each bind GTP. Serine 229 is a Mg(2+) binding site. K(+)-binding residues include serine 244, isoleucine 246, and threonine 249. Threonine 250 lines the Mg(2+) pocket. Lysine 446 contributes to the (6S)-5-formyl-5,6,7,8-tetrahydrofolate binding site.

The protein belongs to the TRAFAC class TrmE-Era-EngA-EngB-Septin-like GTPase superfamily. TrmE GTPase family. Homodimer. Heterotetramer of two MnmE and two MnmG subunits. K(+) is required as a cofactor.

Its subcellular location is the cytoplasm. Functionally, exhibits a very high intrinsic GTPase hydrolysis rate. Involved in the addition of a carboxymethylaminomethyl (cmnm) group at the wobble position (U34) of certain tRNAs, forming tRNA-cmnm(5)s(2)U34. This is tRNA modification GTPase MnmE from Sulfurimonas denitrificans (strain ATCC 33889 / DSM 1251) (Thiomicrospira denitrificans (strain ATCC 33889 / DSM 1251)).